A 416-amino-acid chain; its full sequence is Probable glucan 1,3-beta-glucosidase A (416 aa).

A signal peptide spans 1-21 (MLYNLSKAVLALSVLAASADA). Glu209 acts as the Proton donor in catalysis. 2 cysteine pairs are disulfide-bonded: Cys290/Cys415 and Cys316/Cys341. The Nucleophile role is filled by Glu308.

The protein belongs to the glycosyl hydrolase 5 (cellulase A) family. In terms of assembly, monomer. Mn(2+) is required as a cofactor.

It is found in the secreted. It carries out the reaction Successive hydrolysis of beta-D-glucose units from the non-reducing ends of (1-&gt;3)-beta-D-glucans, releasing alpha-glucose.. Functionally, beta-glucanases participate in the metabolism of beta-glucan, the main structural component of the cell wall. It could also function biosynthetically as a transglycosylase. In Aspergillus terreus (strain NIH 2624 / FGSC A1156), this protein is Probable glucan 1,3-beta-glucosidase A (exgA).